Here is a 211-residue protein sequence, read N- to C-terminus: uncharacterized protein (211 aa).

6 helical membrane passes run 21-38, 53-75, 82-104, 124-146, 159-178, and 188-210; these read WYVI…ASEI, WGMD…YAAV, TAYL…MGVA, IFYA…AANV, PLLI…YWVY, and AVSF…LMEW.

The protein localises to the cell membrane. This is an uncharacterized protein from Archaeoglobus fulgidus (strain ATCC 49558 / DSM 4304 / JCM 9628 / NBRC 100126 / VC-16).